The following is a 233-amino-acid chain: Large ribosomal subunit protein uL1 (233 aa).

The protein belongs to the universal ribosomal protein uL1 family. Part of the 50S ribosomal subunit.

Binds directly to 23S rRNA. The L1 stalk is quite mobile in the ribosome, and is involved in E site tRNA release. Its function is as follows. Protein L1 is also a translational repressor protein, it controls the translation of the L11 operon by binding to its mRNA. In Campylobacter concisus (strain 13826), this protein is Large ribosomal subunit protein uL1.